Reading from the N-terminus, the 80-residue chain is Putative defensin-like protein 28 (80 aa).

Positions 1–22 (MLRANVVVSLVIFAALMQCMNG) are cleaved as a signal peptide.

Belongs to the DEFL family.

The protein localises to the secreted. The sequence is that of Putative defensin-like protein 28 from Arabidopsis thaliana (Mouse-ear cress).